The chain runs to 253 residues: Phosphoglycerate mutase 2 (253 aa).

Residue Thr-3 is modified to Phosphothreonine. Substrate-binding positions include 10–17 (RHGESSWN), 23–24 (CG), Arg-62, 89–92 (ERHY), Lys-100, and 116–117 (RR). His-11 serves as the catalytic Tele-phosphohistidine intermediate. Phosphoserine occurs at positions 14 and 15. Glu-89 (proton donor/acceptor) is an active-site residue. The residue at position 118 (Ser-118) is a Phosphoserine. Residue Thr-121 is modified to Phosphothreonine. Tyr-132 and Tyr-133 each carry phosphotyrosine. Residue Ser-135 is modified to Phosphoserine. Phosphothreonine is present on Thr-152. A substrate-binding site is contributed by 187–188 (GN).

Belongs to the phosphoglycerate mutase family. BPG-dependent PGAM subfamily. As to quaternary structure, homodimer. Interacts with ENO1.

The catalysed reaction is (2R)-2-phosphoglycerate = (2R)-3-phosphoglycerate. It carries out the reaction (2R)-3-phospho-glyceroyl phosphate = (2R)-2,3-bisphosphoglycerate + H(+). Interconversion of 3- and 2-phosphoglycerate with 2,3-bisphosphoglycerate as the primer of the reaction. Can also catalyze the reaction of EC 5.4.2.4 (synthase), but with a reduced activity. The protein is Phosphoglycerate mutase 2 (Pgam2) of Rattus norvegicus (Rat).